Here is a 101-residue protein sequence, read N- to C-terminus: MSAATIKDPRDVVLAPVVSEKSYGLIDEGKYTFLVDPRSNKTEIKLAVEKIFSVKVESINTINRAGKRKRTKFGWGTRKNTKRAIVTLKEGTIDIFGGPLA.

The protein belongs to the universal ribosomal protein uL23 family. As to quaternary structure, part of the 50S ribosomal subunit. Contacts protein L29, and trigger factor when it is bound to the ribosome.

Functionally, one of the early assembly proteins it binds 23S rRNA. One of the proteins that surrounds the polypeptide exit tunnel on the outside of the ribosome. Forms the main docking site for trigger factor binding to the ribosome. The polypeptide is Large ribosomal subunit protein uL23 (Pseudarthrobacter chlorophenolicus (strain ATCC 700700 / DSM 12829 / CIP 107037 / JCM 12360 / KCTC 9906 / NCIMB 13794 / A6) (Arthrobacter chlorophenolicus)).